The chain runs to 368 residues: MVSRTLSLSMSLFRAHLVFYRCALNLNSSYNFGFLVAMTFVLQIITGITLAFRYTSEASCAFASVQHLVREVAAGWEFRMLHATTASFVFLCILIHMTRGLYNWSYSYLTTAWMSGLVLYLLTIATAFLGYVLPWGQMSFWGATVITNLLSPIPYLVPWLLGGYYVSDVTLKRFFVLHFILPFIGCIIIVLHIFYLHLNGSSNPAGIDTALKVAFYPHMLMTDAKCLSYLIGLIFLQAAFGLMELSHPDNSIPVNRFVTPLHIVPEWYFLAYYAVLKVIPSKTGGLLVFMSSLINLGLLSEIRALNTRMLIRQQFMTRNVVSGWVIIWVYSMIFLIIIGSAIPQATYILYGRLATILYLTTGLVLCLY.

Transmembrane regions (helical) follow at residues 32-52 (FGFLVAMTFVLQIITGITLAF), 76-98 (WEFRMLHATTASFVFLCILIHMT), 112-132 (AWMSGLVLYLLTIATAFLGYV), and 174-194 (FFVLHFILPFIGCIIIVLHIF). Residues H82 and H96 each contribute to the heme b site. Positions 178 and 192 each coordinate heme b. H197 contributes to the a ubiquinone binding site. 4 consecutive transmembrane segments (helical) span residues 219–239 (MLMTDAKCLSYLIGLIFLQAA), 285–305 (GLLVFMSSLINLGLLSEIRAL), 323–343 (GWVIIWVYSMIFLIIIGSAIP), and 347–367 (YILYGRLATILYLTTGLVLCL).

This sequence belongs to the cytochrome b family. In terms of assembly, the main subunits of complex b-c1 are: cytochrome b, cytochrome c1 and the Rieske protein. It depends on heme b as a cofactor.

The protein localises to the mitochondrion inner membrane. In terms of biological role, component of the ubiquinol-cytochrome c reductase complex (complex III or cytochrome b-c1 complex) that is part of the mitochondrial respiratory chain. The b-c1 complex mediates electron transfer from ubiquinol to cytochrome c. Contributes to the generation of a proton gradient across the mitochondrial membrane that is then used for ATP synthesis. This is Cytochrome b (MT-CYB) from Toxoplasma gondii.